A 122-amino-acid polypeptide reads, in one-letter code: Large ribosomal subunit protein uL14 (122 aa).

Belongs to the universal ribosomal protein uL14 family. Part of the 50S ribosomal subunit. Forms a cluster with proteins L3 and L19. In the 70S ribosome, L14 and L19 interact and together make contacts with the 16S rRNA in bridges B5 and B8.

In terms of biological role, binds to 23S rRNA. Forms part of two intersubunit bridges in the 70S ribosome. In Exiguobacterium sp. (strain ATCC BAA-1283 / AT1b), this protein is Large ribosomal subunit protein uL14.